A 442-amino-acid chain; its full sequence is MNYTIKDILKLEVAPALGCTEPTAIALGAAAAATLLFPGKAIETIEVWLDPNLFKNGLAVSIPRTHGRSGLDLAAALGALAGDAHLKMEVLTPITDKDVDAALALVAGKQVKVRLLDRHRGLLVRTRIKAGDQIAESVIEQLHDNITSLCLNGEQIETTDLFPRSLEGGKNQTSALELWLRGITMETMIAMIDDLDGSDLEFLQTGIDMNMALARHGLENAVGLGVGTTLEALAQKGLVARDMIHRARVLTAAAADARMSGAPLPAMSSAGSGNHGLTAILPVKAVADHLKSDRKDLCRAVGLSHVVTAFVKAHTGRLAAICACSVAAGAGATAAITWLLGGTPGQIGGAVENIIEDLAGVICDGAKNSCALKLDTAAARAVQAALFAMNGLTVKVTDGIVGGSAEETIRNMGILSSQGMIETDKTILKIMMDKLINSRSEQ.

Belongs to the UPF0597 family.

The protein is UPF0597 protein HRM2_02820 of Desulforapulum autotrophicum (strain ATCC 43914 / DSM 3382 / VKM B-1955 / HRM2) (Desulfobacterium autotrophicum).